Reading from the N-terminus, the 128-residue chain is Lymphocyte antigen 6D (128 aa).

A signal peptide spans 1-20; the sequence is MRTALLLLAALAVATGPALT. A UPAR/Ly6 domain is found at 21–108; that stretch reads LRCHVCTSSS…AAPTRTALAH (88 aa). 5 cysteine pairs are disulfide-bonded: C23–C45, C26–C32, C38–C63, C67–C86, and C87–C92. Residue N98 is the site of GPI-anchor amidated asparagine attachment. Positions 99–128 are cleaved as a propeptide — removed in mature form; the sequence is AAPTRTALAHSALSLGLALSLLAVILAPSL.

In terms of tissue distribution, expressed exclusively at the outer cell surface of transitional epithelia and the keratinocyte of stratified squamous epithelia.

It localises to the cell membrane. In terms of biological role, may act as a specification marker at earliest stage specification of lymphocytes between B- and T-cell development. Marks the earliest stage of B-cell specification. The polypeptide is Lymphocyte antigen 6D (LY6D) (Homo sapiens (Human)).